The sequence spans 400 residues: MAEKILEKLDVLDKQAEIILARRTKINRLQSEGRKTTMAIPLTFDFQLEFEEALATSASKAISKIKEDKSCSITKSKMHVSFKCEPEPRKSNFEKSNLRPFFIQTNVKNKESESTAQIEKKPRKPLDSVGLLEGDRNKRKKSPQMNDFNIKENKSVRNYQLSKYRSVRKKSLLPLCFEDELKNPHAKIVNVSPTKTVTSHMEQKDTNPIIFHDTEYVRMLLLTKNRFSSHPLENENIYPHKRTNFILERNCEILKSIIGNQSISLFKPQKTMPTVQRKDIQIPMSFKAGHTTVDDKLKKKTNKQTLENRSWNTLYNFSQNFSSLTKQFVGYLDKAVIHEMSAQTGKFERMFSAGKPTSIPTSSALPVKCYSKPFKYIYELNNVTPLDNLLNLSNEILNAS.

The segment covering 112-126 (SESTAQIEKKPRKPL) has biased composition (basic and acidic residues). A disordered region spans residues 112 to 151 (SESTAQIEKKPRKPLDSVGLLEGDRNKRKKSPQMNDFNIK).

This is an uncharacterized protein from Homo sapiens (Human).